We begin with the raw amino-acid sequence, 274 residues long: Elongation factor Ts (274 aa).

Residues 82–85 (TDFV) form an involved in Mg(2+) ion dislocation from EF-Tu region.

Belongs to the EF-Ts family.

It is found in the cytoplasm. Its function is as follows. Associates with the EF-Tu.GDP complex and induces the exchange of GDP to GTP. It remains bound to the aminoacyl-tRNA.EF-Tu.GTP complex up to the GTP hydrolysis stage on the ribosome. This Flavobacterium psychrophilum (strain ATCC 49511 / DSM 21280 / CIP 103535 / JIP02/86) protein is Elongation factor Ts.